A 186-amino-acid polypeptide reads, in one-letter code: Ribosome-recycling factor (186 aa).

Belongs to the RRF family.

It is found in the cytoplasm. Functionally, responsible for the release of ribosomes from messenger RNA at the termination of protein biosynthesis. May increase the efficiency of translation by recycling ribosomes from one round of translation to another. The sequence is that of Ribosome-recycling factor from Coprothermobacter proteolyticus (strain ATCC 35245 / DSM 5265 / OCM 4 / BT).